The chain runs to 406 residues: Sorting nexin-6 (406 aa).

Met-1 carries the post-translational modification N-acetylmethionine. Met-2 carries the N-acetylmethionine; in Sorting nexin-6, N-terminally processed modification. The interaction with PIM1 stretch occupies residues 2–179; the sequence is MEGLDDGPDF…NQDLSVRGKN (178 aa). The 148-residue stretch at 26–173 folds into the PX domain; sequence LQSDAALQVD…HVFLEYNQDL (148 aa). A 1,2-diacyl-sn-glycero-3-phospho-(1D-myo-inositol-4,5-bisphosphate) is bound by residues 41–47, 100–106, and 114–117; these read SERDKVK, FDASREK, and EGSM. A phosphoserine mark is found at Ser-116 and Ser-194. The tract at residues 182-199 is membrane-binding amphipathic helix; it reads EKLEDFFKNMVKSADGVI. The BAR domain maps to 203 to 406; sequence VKDVDDFFEH…NCLAVLNGDT (204 aa).

The protein belongs to the sorting nexin family. As to quaternary structure, forms heterodimers with BAR domain-containing sorting nexins SNX1 and SNX2. The heterodimers are proposed to self-assemble into helical arrays on the membrane to stabilize and expand local membrane curvature underlying endosomal tubule formation. Thought to be a component of the originally described retromer complex (also called SNX-BAR retromer) which is a pentamer containing the heterotrimeric retromer cargo-selective complex (CSC), also described as vacuolar protein sorting subcomplex (VPS), and a heterodimeric membrane-deforming subcomplex formed between SNX1 or SNX2 and SNX5 or SNX6 (also called SNX-BAR subcomplex); the respective CSC and SNX-BAR subcomplexes associate with low affinity. Interacts with SNX1, SNX2, VPS26A, VPS29, VPS35, TGFB receptors, BACE1, BRMS1, PIP5K1C. Interacts with DCTN1; the association with DCTN1 is involved in movement of retromer-c ontaining vesicles toward the TGN. Interacts with PIM1; translocating SNX6 to the nucleus. Interacts with CDKN1B and GIT1. In vitro phosphorylated by PIM1; not affecting PIM1-dependent nuclear translocation.

It localises to the early endosome membrane. It is found in the cytoplasmic vesicle. Its subcellular location is the cytoplasm. The protein resides in the nucleus. In terms of biological role, involved in several stages of intracellular trafficking. Interacts with membranes phosphatidylinositol 3,4-bisphosphate and/or phosphatidylinositol 4,5-bisphosphate. Acts in part as component of the retromer membrane-deforming SNX-BAR subcomplex. The SNX-BAR retromer mediates retrograde transport of cargo proteins from endosomes to the trans-Golgi network (TGN) and is involved in endosome-to-plasma membrane transport for cargo protein recycling. The SNX-BAR subcomplex functions to deform the donor membrane into a tubular profile called endosome-to-TGN transport carrier (ETC). Does not have in vitro vesicle-to-membrane remodeling activity. Involved in retrograde endosome-to-TGN transport of lysosomal enzyme receptor IGF2R. May function as link between transport vesicles and dynactin. Negatively regulates retrograde transport of BACE1 from the cell surface to the trans-Golgi network. Involved in E-cadherin sorting and degradation; inhibits PIP5K1C-mediated E-cadherin degradation. In association with GIT1 involved in EGFR degradation. Promotes lysosomal degradation of CDKN1B. May contribute to transcription regulation. This chain is Sorting nexin-6 (SNX6), found in Pongo abelii (Sumatran orangutan).